Consider the following 143-residue polypeptide: Transcription antitermination protein NusB (143 aa).

This sequence belongs to the NusB family.

Its function is as follows. Involved in transcription antitermination. Required for transcription of ribosomal RNA (rRNA) genes. Binds specifically to the boxA antiterminator sequence of the ribosomal RNA (rrn) operons. The chain is Transcription antitermination protein NusB from Desulfatibacillum aliphaticivorans.